The following is a 104-amino-acid chain: Protein RnfH (104 aa).

Belongs to the UPF0125 (RnfH) family.

The sequence is that of Protein RnfH from Pseudomonas savastanoi pv. phaseolicola (strain 1448A / Race 6) (Pseudomonas syringae pv. phaseolicola (strain 1448A / Race 6)).